The sequence spans 404 residues: 8-amino-7-oxononanoate synthase (404 aa).

Arg-20 contacts substrate. 116 to 117 (GY) contributes to the pyridoxal 5'-phosphate binding site. His-141 provides a ligand contact to substrate. Pyridoxal 5'-phosphate contacts are provided by Ser-187, His-215, and Thr-243. Position 246 is an N6-(pyridoxal phosphate)lysine (Lys-246). Substrate is bound at residue Thr-366.

Belongs to the class-II pyridoxal-phosphate-dependent aminotransferase family. BioF subfamily. Homodimer. Requires pyridoxal 5'-phosphate as cofactor.

The enzyme catalyses 6-carboxyhexanoyl-[ACP] + L-alanine + H(+) = (8S)-8-amino-7-oxononanoate + holo-[ACP] + CO2. Its pathway is cofactor biosynthesis; biotin biosynthesis. In terms of biological role, catalyzes the decarboxylative condensation of pimeloyl-[acyl-carrier protein] and L-alanine to produce 8-amino-7-oxononanoate (AON), [acyl-carrier protein], and carbon dioxide. The protein is 8-amino-7-oxononanoate synthase of Cupriavidus necator (strain ATCC 17699 / DSM 428 / KCTC 22496 / NCIMB 10442 / H16 / Stanier 337) (Ralstonia eutropha).